Consider the following 465-residue polypeptide: Branched-chain amino acid permease BcaP (465 aa).

The next 12 membrane-spanning stretches (helical) occupy residues 28-48, 56-76, 88-110, 149-169, 181-201, 219-239, 259-279, 309-329, 359-379, 380-400, 416-436, and 438-458; these read FLAL…PGQV, GVVF…LAYA, AYSW…ALLA, DGGI…IIVF, ILVV…ITVI, FGGF…YIGF, GIIG…LVLV, VVTA…VLAG, VWTL…AFLA, QLIS…IYSL, PFYP…FWGL, and VQAK…YFAY.

This sequence belongs to the amino acid-polyamine-organocation (APC) superfamily.

The protein localises to the cell membrane. Functionally, branched-chain amino acid transport system that specifically transports branched-chain amino acids (BCAAs) (isoleucine, leucine and valine) and, to a lesser extent, methionine. Important for CodY-mediated regulation, and required for optimal growth in media containing free amino acids as the only amino acid source. The sequence is that of Branched-chain amino acid permease BcaP from Lactococcus lactis subsp. cremoris (strain MG1363).